We begin with the raw amino-acid sequence, 660 residues long: Arginine--tRNA ligase, cytoplasmic (660 aa).

An N-acetylmethionine modification is found at M1. Positions M1 to N72 are could be involved in the assembly of the multisynthetase complex. L-arginine-binding positions include S200–N202, H211, Y384, D388, and Q412. The short motif at P201 to L212 is the 'HIGH' region element. The tract at residues N529 to S543 is interaction with tRNA.

The protein belongs to the class-I aminoacyl-tRNA synthetase family. In terms of assembly, interacts (via N-terminus) with AIMP1 (via N-terminus); this stimulates its catalytic activity. Interacts (via N-terminus) with LARS2 (via C-terminus). Monomer. Part of a multisubunit complex that groups tRNA ligases for Arg (RARS1), Asp (DARS1), Gln (QARS1), Ile (IARS1), Leu (LARS1), Lys (KARS1), Met (MARS1) the bifunctional ligase for Glu and Pro (EPRS1) and the auxiliary subunits AIMP1/p43, AIMP2/p38 and EEF1E1/p18. Interacts with QARS1. Part of a complex composed of RARS1, QARS1 and AIMP1.

It is found in the cytoplasm. Its subcellular location is the cytosol. The enzyme catalyses tRNA(Arg) + L-arginine + ATP = L-arginyl-tRNA(Arg) + AMP + diphosphate. Forms part of a macromolecular complex that catalyzes the attachment of specific amino acids to cognate tRNAs during protein synthesis. Modulates the secretion of AIMP1 and may be involved in generation of the inflammatory cytokine EMAP2 from AIMP1. This is Arginine--tRNA ligase, cytoplasmic (Rars1) from Mus musculus (Mouse).